A 264-amino-acid polypeptide reads, in one-letter code: Phosphonoacetaldehyde hydrolase (264 aa).

Catalysis depends on aspartate 9, which acts as the Nucleophile. Mg(2+) is bound by residues aspartate 9 and alanine 11. Lysine 50 acts as the Schiff-base intermediate with substrate in catalysis. Mg(2+) is bound at residue aspartate 183.

The protein belongs to the HAD-like hydrolase superfamily. PhnX family. Homodimer. It depends on Mg(2+) as a cofactor.

It carries out the reaction phosphonoacetaldehyde + H2O = acetaldehyde + phosphate + H(+). In terms of biological role, involved in phosphonate degradation. The protein is Phosphonoacetaldehyde hydrolase of Bacillus cereus (strain AH820).